The primary structure comprises 371 residues: Ribosomal RNA small subunit methyltransferase H (371 aa).

S-adenosyl-L-methionine is bound by residues 43–45 (GGH), aspartate 62, leucine 96, aspartate 110, and glutamine 117. The disordered stretch occupies residues 315 to 371 (AAERLDPTQQQRQRTDRERYRRQVRAMHQPGTGSAVRRPVSGDDGTGTDEEGEGHDD). The segment covering 360–371 (TGTDEEGEGHDD) has biased composition (acidic residues).

The protein belongs to the methyltransferase superfamily. RsmH family.

It localises to the cytoplasm. It catalyses the reaction cytidine(1402) in 16S rRNA + S-adenosyl-L-methionine = N(4)-methylcytidine(1402) in 16S rRNA + S-adenosyl-L-homocysteine + H(+). Functionally, specifically methylates the N4 position of cytidine in position 1402 (C1402) of 16S rRNA. This is Ribosomal RNA small subunit methyltransferase H from Salinispora tropica (strain ATCC BAA-916 / DSM 44818 / JCM 13857 / NBRC 105044 / CNB-440).